Consider the following 372-residue polypeptide: Aminomethyltransferase (372 aa).

Belongs to the GcvT family. In terms of assembly, the glycine cleavage system is composed of four proteins: P, T, L and H.

The catalysed reaction is N(6)-[(R)-S(8)-aminomethyldihydrolipoyl]-L-lysyl-[protein] + (6S)-5,6,7,8-tetrahydrofolate = N(6)-[(R)-dihydrolipoyl]-L-lysyl-[protein] + (6R)-5,10-methylene-5,6,7,8-tetrahydrofolate + NH4(+). Functionally, the glycine cleavage system catalyzes the degradation of glycine. This Burkholderia multivorans (strain ATCC 17616 / 249) protein is Aminomethyltransferase.